We begin with the raw amino-acid sequence, 426 residues long: PI-PLC X domain-containing protein At5g67130 (426 aa).

Positions 1 to 28 are cleaved as a signal peptide; sequence MSACINGLCRAVTVSLLLLLLSFSFSSA. The PI-PLC X-box domain maps to 76 to 232; the sequence is IINGLPFNKY…MVQENHRLLV (157 aa). N-linked (GlcNAc...) asparagine glycans are attached at residues N151 and N255. Residues 258–277 form a disordered region; that stretch reads GDPGVKRGSCPNRKESQPLN. A glycan (N-linked (GlcNAc...) asparagine) is linked at N370. A lipid anchor (GPI-anchor amidated serine) is attached at S404. The propeptide at 405–426 is removed in mature form; the sequence is VAQLNNIVVFCFSLLPLLIFLL.

The protein localises to the cell membrane. This is PI-PLC X domain-containing protein At5g67130 from Arabidopsis thaliana (Mouse-ear cress).